The chain runs to 190 residues: ATP synthase subunit delta (190 aa).

The protein belongs to the ATPase delta chain family. In terms of assembly, F-type ATPases have 2 components, F(1) - the catalytic core - and F(0) - the membrane proton channel. F(1) has five subunits: alpha(3), beta(3), gamma(1), delta(1), epsilon(1). F(0) has three main subunits: a(1), b(2) and c(10-14). The alpha and beta chains form an alternating ring which encloses part of the gamma chain. F(1) is attached to F(0) by a central stalk formed by the gamma and epsilon chains, while a peripheral stalk is formed by the delta and b chains.

The protein localises to the cell inner membrane. F(1)F(0) ATP synthase produces ATP from ADP in the presence of a proton or sodium gradient. F-type ATPases consist of two structural domains, F(1) containing the extramembraneous catalytic core and F(0) containing the membrane proton channel, linked together by a central stalk and a peripheral stalk. During catalysis, ATP synthesis in the catalytic domain of F(1) is coupled via a rotary mechanism of the central stalk subunits to proton translocation. In terms of biological role, this protein is part of the stalk that links CF(0) to CF(1). It either transmits conformational changes from CF(0) to CF(1) or is implicated in proton conduction. The sequence is that of ATP synthase subunit delta from Methylobacterium nodulans (strain LMG 21967 / CNCM I-2342 / ORS 2060).